The sequence spans 387 residues: Alanine racemase (387 aa).

The active-site Proton acceptor; specific for D-alanine is the K38. K38 carries the N6-(pyridoxal phosphate)lysine modification. R136 lines the substrate pocket. Catalysis depends on Y267, which acts as the Proton acceptor; specific for L-alanine. M315 lines the substrate pocket.

This sequence belongs to the alanine racemase family. It depends on pyridoxal 5'-phosphate as a cofactor.

The enzyme catalyses L-alanine = D-alanine. Its pathway is amino-acid biosynthesis; D-alanine biosynthesis; D-alanine from L-alanine: step 1/1. Catalyzes the interconversion of L-alanine and D-alanine. May also act on other amino acids. This Clostridium novyi (strain NT) protein is Alanine racemase (alr).